The sequence spans 311 residues: Probable porphobilinogen deaminase (311 aa).

Residue C237 is modified to S-(dipyrrolylmethanemethyl)cysteine. Residues 270–289 (SKTGDKNNPKSLGQSAGEEL) are disordered.

The protein belongs to the HMBS family. Dipyrromethane is required as a cofactor.

The enzyme catalyses 4 porphobilinogen + H2O = hydroxymethylbilane + 4 NH4(+). It participates in porphyrin-containing compound metabolism; protoporphyrin-IX biosynthesis; coproporphyrinogen-III from 5-aminolevulinate: step 2/4. Its function is as follows. Tetrapolymerization of the monopyrrole PBG into the hydroxymethylbilane pre-uroporphyrinogen in several discrete steps. The sequence is that of Probable porphobilinogen deaminase from Nitrosopumilus maritimus (strain SCM1).